A 185-amino-acid polypeptide reads, in one-letter code: Elongation factor P (185 aa).

It belongs to the elongation factor P family.

It is found in the cytoplasm. The protein operates within protein biosynthesis; polypeptide chain elongation. Its function is as follows. Involved in peptide bond synthesis. Stimulates efficient translation and peptide-bond synthesis on native or reconstituted 70S ribosomes in vitro. Probably functions indirectly by altering the affinity of the ribosome for aminoacyl-tRNA, thus increasing their reactivity as acceptors for peptidyl transferase. In Desulforudis audaxviator (strain MP104C), this protein is Elongation factor P.